The chain runs to 392 residues: MIQGSYRDTWTEVSLDAIHHNVTAFKNHIDHHTKLMAVVKADGYGHGAVEVAQEALTAGADYLAVAILDEAIQLRDAGIDAPLLVLGYTHPDGLKTAIEQQITLTVFTKEDAEQVKIAAELLQKTARIHLKIESGMNRIGIATKEEAVEIAKALHSSFVMLEGAFTHFADADNTDPTYTEMQFHRFNQIISHLRTHCHIPIVHCCNTAATIAYPDMHLDMVRVGIGIYGLYPETHLKELIDLKQAMSLKTKPVYIKTVDQDTAISYGLTFTTERKSTIATMPIGYADGFSRLLSNRGDVIVHAGRAPIVGRICMDQSMIDVTDVENVGLDDVITIFGEPTEGYIAMEEVANLMGTIHYETACLIGKRVPRIYMRQSEAVNYKGLVEKEPVTS.

Residue K40 is the Proton acceptor; specific for D-alanine of the active site. K40 carries the post-translational modification N6-(pyridoxal phosphate)lysine. Position 138 (R138) interacts with substrate. The active-site Proton acceptor; specific for L-alanine is the Y266. M314 is a binding site for substrate.

Belongs to the alanine racemase family. Pyridoxal 5'-phosphate is required as a cofactor.

It catalyses the reaction L-alanine = D-alanine. The protein operates within amino-acid biosynthesis; D-alanine biosynthesis; D-alanine from L-alanine: step 1/1. Functionally, catalyzes the interconversion of L-alanine and D-alanine. May also act on other amino acids. This Oceanobacillus iheyensis (strain DSM 14371 / CIP 107618 / JCM 11309 / KCTC 3954 / HTE831) protein is Alanine racemase 2 (alr2).